The following is a 542-amino-acid chain: Pre-mRNA-splicing factor 38B (542 aa).

Residues 1-12 (MANNSPALTGNS) are compositionally biased toward polar residues. Positions 1–41 (MANNSPALTGNSQPQHQAAAAVTQQQQQCGGGGGATKPAVS) are disordered. Position 2 is an N-acetylalanine (Ala-2). Ser-5 carries the phosphoserine modification. Low complexity predominate over residues 13–28 (QPQHQAAAAVTQQQQQ). Lys-228 bears the N6-acetyllysine mark. Residues 233-542 (QIKTRPRKIK…KEHKSKDETV (310 aa)) form a disordered region. Over residues 244–256 (DGKEGIEEIDRHV) the composition is skewed to basic and acidic residues. Over residues 257–285 (ERRRSRSPRRSLSPRRSPRRSRSRSHHRE) the composition is skewed to basic residues. Residues Ser-289, Ser-291, Ser-319, and Ser-321 each carry the phosphoserine modification. Positions 292 to 328 (FDRELEREKERQRLEREAKEREKERRRSRSIDRGLDR) are enriched in basic and acidic residues. A coiled-coil region spans residues 293–322 (DRELEREKERQRLEREAKEREKERRRSRSI). Residues 329-345 (RRSRSRERHRSRSRSRD) show a composition bias toward basic residues. Basic and acidic residues predominate over residues 346–419 (RKGDRRDRDR…DRRHRDDKKE (74 aa)). The segment covering 420-447 (SKKKHSRSRSRERKHRSRSRNAGKRSRS) has biased composition (basic residues). Ser-445 carries the post-translational modification Phosphoserine. Basic and acidic residues predominate over residues 448 to 465 (RSKDKSSRHKNESKEKAN). Phosphoserine occurs at positions 470, 472, and 478. Composition is skewed to basic and acidic residues over residues 478-491 (SVEK…PSRE) and 498-520 (RSQD…RQDH). Ser-523, Ser-525, and Ser-530 each carry phosphoserine. Over residues 530 to 542 (SQEKEHKSKDETV) the composition is skewed to basic and acidic residues.

This sequence belongs to the PRP38 family.

The protein resides in the nucleus. Functionally, may be required for pre-mRNA splicing. This chain is Pre-mRNA-splicing factor 38B (Prpf38b), found in Mus musculus (Mouse).